Consider the following 299-residue polypeptide: Deoxyhypusine hydroxylase (299 aa).

5 HEAT-like PBS-type repeats span residues 54–80 (LKHE…VLQD), 87–113 (VRHE…YSED), 174–200 (DRYR…GLRA), 205–231 (FRHE…ALRS), and 238–264 (VRHE…FAQD). Residues H56, H89, and E90 each coordinate Fe cation. The Fe cation site is built by H207, H240, and E241.

The protein belongs to the deoxyhypusine hydroxylase family. Fe(2+) is required as a cofactor.

The enzyme catalyses [eIF5A protein]-deoxyhypusine + AH2 + O2 = [eIF5A protein]-hypusine + A + H2O. It participates in protein modification; eIF5A hypusination. In terms of biological role, catalyzes the hydroxylation of the N(6)-(4-aminobutyl)-L-lysine intermediate produced by deoxyhypusine synthase/DHPS on a critical lysine of the eukaryotic translation initiation factor 5A/eIF-5A. This is the second step of the post-translational modification of that lysine into an unusual amino acid residue named hypusine. Hypusination is unique to mature eIF-5A factor and is essential for its function. This is Deoxyhypusine hydroxylase from Gallus gallus (Chicken).